Consider the following 80-residue polypeptide: OMEGA-myrmeciitoxin(02)-Mg1a (80 aa).

An N-terminal signal peptide occupies residues 1 to 30 (MKNNYISTCIVYLMAALLLISVISIKECTA). In terms of domain architecture, EGF-like spans 35 to 75 (YGDPCSDDLKDYCIHGDCFFLKELNQPACRCYTGYYGSRCE). 3 disulfide bridges follow: Cys39-Cys52, Cys47-Cys63, and Cys65-Cys74.

It belongs to the EGF domain peptide family. Expressed by the venom gland.

Its subcellular location is the secreted. Functionally, ant peptide with probable defensive activity which acts as a potent agonist of the mammalian epidermal growth factor receptor (EGFR) (EC(50)=6.3 nM). Mimics, both structurally and functionally, vertebrate epidermal growth factor (EGF) peptide hormones. In vivo, intraplantar injection in mice causes long-lasting (several days) hypersensitivity of the injected paw to both mechanical and thermal stimuli. Its long-lasting effect is unusual for venom toxins whose effects are usually immediate. One possible explanation is that it would reduce the duration of a nest attack, discourage future attacks, or enhance the actions of subsequent exposure to other pain-inducing venom peptides. This chain is OMEGA-myrmeciitoxin(02)-Mg1a, found in Myrmecia gulosa (Red bulldog ant).